The chain runs to 688 residues: Glycine--tRNA ligase beta subunit (688 aa).

The protein belongs to the class-II aminoacyl-tRNA synthetase family. Tetramer of two alpha and two beta subunits.

Its subcellular location is the cytoplasm. It catalyses the reaction tRNA(Gly) + glycine + ATP = glycyl-tRNA(Gly) + AMP + diphosphate. In Shewanella sp. (strain MR-4), this protein is Glycine--tRNA ligase beta subunit.